We begin with the raw amino-acid sequence, 421 residues long: eIF5-mimic protein 1 (421 aa).

The tract at residues 1-24 is disordered; sequence MNTGKQQKPVLTGQRFKTRKRDEK. Residues 250 to 417 enclose the W2 domain; that stretch reads TQQTLGTRKE…QNAEEESESE (168 aa).

This sequence belongs to the BZW family.

Its subcellular location is the cytoplasm. Its function is as follows. Translation initiation regulator which may repress non-AUG initiated translation and repeat-associated non-AUG (RAN) initiated translation by acting as a competitive inhibitor of eukaryotic translation initiation factor 5 (EIF5) function. The protein is eIF5-mimic protein 1 (bzw2) of Danio rerio (Zebrafish).